We begin with the raw amino-acid sequence, 199 residues long: dCTP deaminase, dUMP-forming (199 aa).

DCTP contacts are provided by residues 101 to 106 (KSSLGR), Asp-119, 127 to 129 (TLE), Gln-148, Tyr-162, and Gln-174. The active-site Proton donor/acceptor is the Glu-129. Residues 163–199 (GSAAAGSKYQGQRGPTPSRSYLNFPLPSDAVDAVESR) are disordered. A compositionally biased stretch (polar residues) spans 171 to 183 (YQGQRGPTPSRSY).

It belongs to the dCTP deaminase family. As to quaternary structure, homotrimer.

It catalyses the reaction dCTP + 2 H2O = dUMP + NH4(+) + diphosphate. The protein operates within pyrimidine metabolism; dUMP biosynthesis; dUMP from dCTP: step 1/1. Functionally, bifunctional enzyme that catalyzes both the deamination of dCTP to dUTP and the hydrolysis of dUTP to dUMP without releasing the toxic dUTP intermediate. This Nocardia farcinica (strain IFM 10152) protein is dCTP deaminase, dUMP-forming.